The following is a 685-amino-acid chain: Galactocerebrosidase (685 aa).

A signal peptide spans 1–42 (MAEWLLSASWQRRAKAMTAAAGSAGRAAVPLLLCALLAPGGA). T109 lines the substrate pocket. N143 is a glycosylation site (N-linked (GlcNAc...) asparagine). Positions 151 and 197 each coordinate substrate. The active-site Proton donor/acceptor is the E198. E274 (nucleophile) is an active-site residue. The cysteines at positions 287 and 394 are disulfide-linked. Residue N379 is glycosylated (N-linked (GlcNAc...) asparagine). Residue R396 coordinates substrate. N403, N556, N559, and N602 each carry an N-linked (GlcNAc...) asparagine glycan.

Belongs to the glycosyl hydrolase 59 family. Detected in urine. Detected in testis, brain and placenta (at protein level). Detected in kidney and liver.

The protein resides in the lysosome. The catalysed reaction is a beta-D-galactosyl-(1&lt;-&gt;1')-N-acylsphing-4-enine + H2O = an N-acylsphing-4-enine + D-galactose. It carries out the reaction beta-D-galactosyl-(1&lt;-&gt;1)-sphing-4-enine + H2O = sphing-4-enine + D-galactose. The enzyme catalyses a D-galactosylceramide + H2O = an N-acyl-sphingoid base + D-galactose. Functionally, hydrolyzes the galactose ester bonds of glycolipids such as galactosylceramide and galactosylsphingosine. Enzyme with very low activity responsible for the lysosomal catabolism of galactosylceramide, a major lipid in myelin, kidney and epithelial cells of small intestine and colon. This chain is Galactocerebrosidase, found in Homo sapiens (Human).